A 104-amino-acid polypeptide reads, in one-letter code: Large ribosomal subunit protein bL21 (104 aa).

This sequence belongs to the bacterial ribosomal protein bL21 family. In terms of assembly, part of the 50S ribosomal subunit. Contacts protein L20.

Functionally, this protein binds to 23S rRNA in the presence of protein L20. This chain is Large ribosomal subunit protein bL21, found in Nitrosococcus oceani (strain ATCC 19707 / BCRC 17464 / JCM 30415 / NCIMB 11848 / C-107).